The primary structure comprises 196 residues: Thymidine kinase (196 aa).

ATP contacts are provided by residues Ser9–Ser16 and Asp88–Gln91. Residue Glu89 is the Proton acceptor of the active site. Zn(2+) is bound by residues Cys146, Cys148, Cys183, and His186.

Belongs to the thymidine kinase family. In terms of assembly, homotetramer.

It localises to the cytoplasm. The catalysed reaction is thymidine + ATP = dTMP + ADP + H(+). In Coxiella burnetii (strain RSA 493 / Nine Mile phase I), this protein is Thymidine kinase.